The primary structure comprises 460 residues: Orexin receptor type 2 (460 aa).

Over 1 to 54 the chain is Extracellular; the sequence is MSSTKLEDSLSRRNWSSASELNETQEPFLNPTDYDDEEFLRYLWREYLHPKEYE. N-linked (GlcNAc...) asparagine glycans are attached at residues asparagine 14 and asparagine 22. The interval 33–49 is required for response to orexin-A; that stretch reads DYDDEEFLRYLWREYLH. A helical transmembrane segment spans residues 55-75; the sequence is WVLIAGYIIVFVVALIGNVLV. At 76 to 88 the chain is on the cytoplasmic side; it reads CVAVWKNHHMRTV. The chain crosses the membrane as a helical span at residues 89-110; it reads TNYFIVNLSLADVLVTITCLPA. Over 111–127 the chain is Extracellular; it reads TLVVDITETWFFGQSLC. An intrachain disulfide couples cysteine 127 to cysteine 210. The helical transmembrane segment at 128-150 threads the bilayer; that stretch reads KVIPYLQTVSVSVSVLTLSCIAL. At 151 to 170 the chain is on the cytoplasmic side; it reads DRWYAICHPLMFKSTAKRAR. A helical transmembrane segment spans residues 171-191; the sequence is NSIVVIWIVSCIIMIPQAIVM. Residues 192–222 are Extracellular-facing; the sequence is ECSSMLPGLANKTTLFTVCDEHWGGEVYPKM. N-linked (GlcNAc...) asparagine glycosylation is present at asparagine 202. A helical membrane pass occupies residues 223–243; sequence YHICFFLVTYMAPLCLMILAY. Residues 244-304 lie on the Cytoplasmic side of the membrane; the sequence is LQIFRKLWCR…QIRARRKTAR (61 aa). Residues 305 to 326 traverse the membrane as a helical segment; it reads MLMVVLLVFAICYLPISILNVL. The Extracellular segment spans residues 327-342; sequence KRVFGMFTHTEDRETV. The chain crosses the membrane as a helical span at residues 343–366; sequence YAWFTFSHWLVYANSAANPIIYNF. Residues 367 to 460 lie on the Cytoplasmic side of the membrane; sequence LSGKFREEFK…SSLLSTWLEV (94 aa).

This sequence belongs to the G-protein coupled receptor 1 family. Widely expressed. Isoform 2 not detected in skeletal muscle and kidney.

The protein localises to the cell membrane. In terms of biological role, nonselective, high-affinity receptor for both orexin-A and orexin-B neuropeptides. Triggers an increase in cytoplasmic Ca(2+) levels in response to orexin-A binding. In Mus musculus (Mouse), this protein is Orexin receptor type 2 (Hcrtr2).